Reading from the N-terminus, the 222-residue chain is UPF0502 protein XCV4380 (222 aa).

This sequence belongs to the UPF0502 family.

The chain is UPF0502 protein XCV4380 from Xanthomonas euvesicatoria pv. vesicatoria (strain 85-10) (Xanthomonas campestris pv. vesicatoria).